Consider the following 504-residue polypeptide: Sucrose phosphorylase (504 aa).

Asp-50 lines the substrate pocket. Sucrose-binding positions include His-88, 190–192 (RLD), Glu-232, 289–290 (HD), 342–345 (DLYQ), and Arg-399. Asp-192 serves as the catalytic Nucleophile. Glu-232 serves as the catalytic Proton donor.

Belongs to the glycosyl hydrolase 13 family. Sucrose phosphorylase subfamily. Homodimer.

The enzyme catalyses sucrose + phosphate = D-fructose + alpha-D-glucose 1-phosphate. Its function is as follows. Catalyzes the reversible phosphorolysis of sucrose into alpha-D-glucose 1-phosphate (Glc1P) and D-fructose. Is involved in sucrose degradation. Also displays transglucosylation activity in vitro, by transferring the glucosyl moiety of Glc1P to a broad range of monomeric sugars, such as D- and L-arabinose, D- and L-arabitol, and xylitol. This chain is Sucrose phosphorylase, found in Bifidobacterium adolescentis (strain ATCC 15703 / DSM 20083 / NCTC 11814 / E194a).